A 117-amino-acid chain; its full sequence is UPF0102 protein Spro_4337 (117 aa).

It belongs to the UPF0102 family.

This Serratia proteamaculans (strain 568) protein is UPF0102 protein Spro_4337.